We begin with the raw amino-acid sequence, 258 residues long: Tryptophan synthase alpha chain (258 aa).

Catalysis depends on proton acceptor residues Glu-52 and Asp-63.

It belongs to the TrpA family. In terms of assembly, tetramer of two alpha and two beta chains.

It catalyses the reaction (1S,2R)-1-C-(indol-3-yl)glycerol 3-phosphate + L-serine = D-glyceraldehyde 3-phosphate + L-tryptophan + H2O. Its pathway is amino-acid biosynthesis; L-tryptophan biosynthesis; L-tryptophan from chorismate: step 5/5. The alpha subunit is responsible for the aldol cleavage of indoleglycerol phosphate to indole and glyceraldehyde 3-phosphate. The protein is Tryptophan synthase alpha chain of Streptococcus pneumoniae serotype 19F (strain G54).